Reading from the N-terminus, the 502-residue chain is Glycerol kinase (502 aa).

Thr14 contacts ADP. Residues Thr14, Thr15, and Ser16 each coordinate ATP. Thr14 contributes to the sn-glycerol 3-phosphate binding site. Residue Arg18 coordinates ADP. Positions 84, 85, and 136 each coordinate sn-glycerol 3-phosphate. Residues Arg84, Glu85, and Tyr136 each coordinate glycerol. At His232 the chain carries Phosphohistidine; by HPr. Asp246 contributes to the sn-glycerol 3-phosphate binding site. Glycerol contacts are provided by Asp246 and Gln247. 2 residues coordinate ADP: Thr268 and Gly311. ATP contacts are provided by Thr268, Gly311, Gln315, and Gly412. Residues Gly412 and Asn416 each coordinate ADP.

Belongs to the FGGY kinase family. As to quaternary structure, homotetramer and homodimer (in equilibrium). The phosphoenolpyruvate-dependent sugar phosphotransferase system (PTS), including enzyme I, and histidine-containing protein (HPr) are required for the phosphorylation, which leads to the activation of the enzyme.

The catalysed reaction is glycerol + ATP = sn-glycerol 3-phosphate + ADP + H(+). Its pathway is polyol metabolism; glycerol degradation via glycerol kinase pathway; sn-glycerol 3-phosphate from glycerol: step 1/1. With respect to regulation, activated by phosphorylation and inhibited by fructose 1,6-bisphosphate (FBP). In terms of biological role, key enzyme in the regulation of glycerol uptake and metabolism. Catalyzes the phosphorylation of glycerol to yield sn-glycerol 3-phosphate. This Streptococcus sanguinis (strain SK36) protein is Glycerol kinase.